The sequence spans 464 residues: C-terminal processing peptidase, chloroplastic (464 aa).

A chloroplast-targeting transit peptide spans 1–32 (MHSRTNCLQTSVRAPQPHFRPFTAVKTCRQRC). The N-terminal 45 residues, 33-77 (STTAAAAKRDQAQEQQPWIQVGLGLAAAATAVAVGLGAAALPAQA), are a transit peptide targeting the thylakoid. The PDZ domain occupies 149 to 234 (LAALRRGTAG…SQVEVVLHAP (86 aa)). Active-site charge relay system residues include serine 372 and lysine 397.

This sequence belongs to the peptidase S41A family. Monomer.

It is found in the plastid. Its subcellular location is the chloroplast thylakoid lumen. The enzyme catalyses The enzyme shows specific recognition of a C-terminal tripeptide, Xaa-Yaa-Zaa, in which Xaa is preferably Ala or Leu, Yaa is preferably Ala or Tyr, and Zaa is preferably Ala, but then cleaves at a variable distance from the C-terminus. A typical cleavage is -Ala-Ala-|-Arg-Ala-Ala-Lys-Glu-Asn-Tyr-Ala-Leu-Ala-Ala.. Not inhibited by antipain, 4-amidinophenylmethanesulfonyl fluoride, aprotinin, chymostatin, 3,4-dichloroisocoumarin, diisopropyl fluorophosphate, E64, EDTA, EGTA, iodoacetamide, leupeptin, pepstatin, o-phenanthroline, N-ethylmaleimide, phosphoramidon or phenylmethylsulfonyl fluoride. Its function is as follows. Protease involved in the C-terminal processing of the chloroplastic D1 protein of photosystem II. This proteolytic processing is necessary to allow the light-driven assembly of the tetranuclear manganese cluster, which is responsible for photosynthetic water oxidation. The protein is C-terminal processing peptidase, chloroplastic (ctpA) of Tetradesmus obliquus (Green alga).